The following is a 541-amino-acid chain: Exopolysaccharide phosphotransferase SCO6021 (541 aa).

It belongs to the stealth family.

In Streptomyces coelicolor (strain ATCC BAA-471 / A3(2) / M145), this protein is Exopolysaccharide phosphotransferase SCO6021.